The primary structure comprises 317 residues: MDFEASARDLTTPVKGAKIVPNMSVDELVREYAGCAFGAGRLAEAVDIYYEMLASEKTTKFFGLAGAMTPAGMRGIIADLIRDGHIDVLVTTGANMVHDTVEALGLHHYKGSDCANDIQLRHECIDRIYDVYLPDQHFTDLEEFLQSVYAGLPQEKLSIRQVLTEIGKNLDDDSSILKTAAEMGVPVYCPALQDSVIGLQAWLYKEGNLLHVDAFADMHEFMEICYEAESAGAMLLGGGVPKNYILQSMLVTPKSFDYAIQLTMDRPETGGLSGATLDEAQSWGKVGEDAKSVTVYADATITLPLIVSAVRTRLSKR.

The active-site Nucleophile is lysine 285.

Belongs to the deoxyhypusine synthase family. The cofactor is NAD(+).

The enzyme catalyses [eIF5A protein]-L-lysine + spermidine = [eIF5A protein]-deoxyhypusine + propane-1,3-diamine. It functions in the pathway protein modification; eIF5A hypusination. In terms of biological role, catalyzes the NAD-dependent oxidative cleavage of spermidine and the subsequent transfer of the butylamine moiety of spermidine to the epsilon-amino group of a specific lysine residue of the eIF-5A precursor protein to form the intermediate deoxyhypusine residue. The sequence is that of Probable deoxyhypusine synthase 1 (dys1) from Methanosarcina acetivorans (strain ATCC 35395 / DSM 2834 / JCM 12185 / C2A).